The chain runs to 368 residues: 3-isopropylmalate dehydrogenase (368 aa).

Position 79 to 92 (Gly79 to Glu92) interacts with NAD(+). Positions 99, 109, 138, and 228 each coordinate substrate. Residues Asp228, Asp252, and Asp256 each coordinate Mg(2+). Gly292–Asn304 is a binding site for NAD(+).

Belongs to the isocitrate and isopropylmalate dehydrogenases family. LeuB type 1 subfamily. Homodimer. It depends on Mg(2+) as a cofactor. Mn(2+) serves as cofactor.

The protein localises to the cytoplasm. It carries out the reaction (2R,3S)-3-isopropylmalate + NAD(+) = 4-methyl-2-oxopentanoate + CO2 + NADH. It participates in amino-acid biosynthesis; L-leucine biosynthesis; L-leucine from 3-methyl-2-oxobutanoate: step 3/4. In terms of biological role, catalyzes the oxidation of 3-carboxy-2-hydroxy-4-methylpentanoate (3-isopropylmalate) to 3-carboxy-4-methyl-2-oxopentanoate. The product decarboxylates to 4-methyl-2 oxopentanoate. The sequence is that of 3-isopropylmalate dehydrogenase from Symbiobacterium thermophilum (strain DSM 24528 / JCM 14929 / IAM 14863 / T).